A 230-amino-acid chain; its full sequence is Thymine/uracil-DNA glycosylase (230 aa).

Residues cysteine 204, cysteine 211, cysteine 214, and cysteine 221 each contribute to the [4Fe-4S] cluster site.

Belongs to the Nth/MutY family. Requires [4Fe-4S] cluster as cofactor.

The catalysed reaction is Hydrolyzes mismatched double-stranded DNA and polynucleotides, releasing free thymine.. In terms of biological role, DNA glycosylase that excises thymine from T/G mismatches and uracil from U/G mismatches. Can also process T/GO and U/GO, but not A/G, T/C and U/C. Has weak AP lyase activity. In Pyrobaculum aerophilum (strain ATCC 51768 / DSM 7523 / JCM 9630 / CIP 104966 / NBRC 100827 / IM2), this protein is Thymine/uracil-DNA glycosylase.